The primary structure comprises 743 residues: NAD(P)H-quinone oxidoreductase subunit 5, chloroplastic (743 aa).

Transmembrane regions (helical) follow at residues 9 to 29 (WIIP…LLFF), 40 to 60 (WAFI…DLSI), 89 to 109 (IDPL…LVLI), 125 to 145 (FAYM…SNFI), 147 to 167 (IYIF…FWFT), 185 to 205 (GDFG…SFEF), 219 to 239 (NEVN…GPVA), 258 to 278 (TPIS…FLVA), 280 to 300 (LLPL…IGII), 327 to 347 (LGYM…FHLI), 354 to 374 (ALLF…VGYF), 396 to 416 (TAFL…CFWS), 425 to 445 (WLYS…TAFY), 546 to 566 (ILFV…IGIP), 607 to 627 (LSVS…KPFY), and 721 to 741 (FYLL…FFFF).

The protein belongs to the complex I subunit 5 family. In terms of assembly, NDH is composed of at least 16 different subunits, 5 of which are encoded in the nucleus.

It is found in the plastid. It localises to the chloroplast thylakoid membrane. The catalysed reaction is a plastoquinone + NADH + (n+1) H(+)(in) = a plastoquinol + NAD(+) + n H(+)(out). The enzyme catalyses a plastoquinone + NADPH + (n+1) H(+)(in) = a plastoquinol + NADP(+) + n H(+)(out). Functionally, NDH shuttles electrons from NAD(P)H:plastoquinone, via FMN and iron-sulfur (Fe-S) centers, to quinones in the photosynthetic chain and possibly in a chloroplast respiratory chain. The immediate electron acceptor for the enzyme in this species is believed to be plastoquinone. Couples the redox reaction to proton translocation, and thus conserves the redox energy in a proton gradient. The polypeptide is NAD(P)H-quinone oxidoreductase subunit 5, chloroplastic (ndhF) (Citrus sinensis (Sweet orange)).